We begin with the raw amino-acid sequence, 369 residues long: Flagellar P-ring protein 2 (369 aa).

Positions 1 to 24 (MCAFAAILSLLSVLLMATSRSSDA) are cleaved as a signal peptide.

Belongs to the FlgI family. In terms of assembly, the basal body constitutes a major portion of the flagellar organelle and consists of four rings (L,P,S, and M) mounted on a central rod.

Its subcellular location is the periplasm. It localises to the bacterial flagellum basal body. Functionally, assembles around the rod to form the L-ring and probably protects the motor/basal body from shearing forces during rotation. In Burkholderia thailandensis (strain ATCC 700388 / DSM 13276 / CCUG 48851 / CIP 106301 / E264), this protein is Flagellar P-ring protein 2.